The sequence spans 509 residues: Ribonuclease Y (509 aa).

A helical membrane pass occupies residues 1–21; the sequence is MIILVAVVTAVISFGLGYVVA. Residues 199 to 259 form the KH domain; the sequence is TVSTVSLPSD…IRREIARLTL (61 aa). The HD domain occupies 325–418; it reads VLDHSIEVAQ…VAAADALSAA (94 aa).

This sequence belongs to the RNase Y family.

Its subcellular location is the cell membrane. Its function is as follows. Endoribonuclease that initiates mRNA decay. In Pseudothermotoga lettingae (strain ATCC BAA-301 / DSM 14385 / NBRC 107922 / TMO) (Thermotoga lettingae), this protein is Ribonuclease Y.